The primary structure comprises 151 residues: MTKKYAMTATEVMEVIPNRYPIMFIDYVDEISENKIVATKNVTINEEVFNGHFPGNPTFPGVLILESLAQAGSILILKKEEFQGKMAYIGGIDKAKFRQKVTPGDVMKLEFEITKFRGKVGTADAAAYVDGKKVTTCQFTFIVDEAAEQTN.

H52 is a catalytic residue.

Belongs to the thioester dehydratase family. FabZ subfamily.

The protein resides in the cytoplasm. The catalysed reaction is a (3R)-hydroxyacyl-[ACP] = a (2E)-enoyl-[ACP] + H2O. Functionally, involved in unsaturated fatty acids biosynthesis. Catalyzes the dehydration of short chain beta-hydroxyacyl-ACPs and long chain saturated and unsaturated beta-hydroxyacyl-ACPs. The protein is 3-hydroxyacyl-[acyl-carrier-protein] dehydratase FabZ (fabZ1) of Lactococcus lactis subsp. lactis (strain IL1403) (Streptococcus lactis).